The chain runs to 426 residues: Glutamate-1-semialdehyde 2,1-aminomutase (426 aa).

An N6-(pyridoxal phosphate)lysine modification is found at K265.

Belongs to the class-III pyridoxal-phosphate-dependent aminotransferase family. HemL subfamily. Homodimer. It depends on pyridoxal 5'-phosphate as a cofactor.

The protein resides in the cytoplasm. The enzyme catalyses (S)-4-amino-5-oxopentanoate = 5-aminolevulinate. The protein operates within porphyrin-containing compound metabolism; protoporphyrin-IX biosynthesis; 5-aminolevulinate from L-glutamyl-tRNA(Glu): step 2/2. This chain is Glutamate-1-semialdehyde 2,1-aminomutase, found in Salmonella agona (strain SL483).